The primary structure comprises 324 residues: Polyketide biosynthesis acyltransferase homolog BaeD (324 aa).

Ser99 is an active-site residue.

Its subcellular location is the cytoplasm. The protein operates within antibiotic biosynthesis; bacillaene biosynthesis. In terms of biological role, probably involved in some intermediate steps for the synthesis of the antibiotic polyketide bacillaene which is involved in secondary metabolism. The protein is Polyketide biosynthesis acyltransferase homolog BaeD (baeD) of Bacillus velezensis (strain DSM 23117 / BGSC 10A6 / LMG 26770 / FZB42) (Bacillus amyloliquefaciens subsp. plantarum).